Consider the following 120-residue polypeptide: Small ribosomal subunit protein uS13 (120 aa).

Positions 97 to 120 (PVRGQRTKTNARTRKGKKKTVGAK) are disordered.

Belongs to the universal ribosomal protein uS13 family. As to quaternary structure, part of the 30S ribosomal subunit. Forms a loose heterodimer with protein S19. Forms two bridges to the 50S subunit in the 70S ribosome.

In terms of biological role, located at the top of the head of the 30S subunit, it contacts several helices of the 16S rRNA. In the 70S ribosome it contacts the 23S rRNA (bridge B1a) and protein L5 of the 50S subunit (bridge B1b), connecting the 2 subunits; these bridges are implicated in subunit movement. Contacts the tRNAs in the A and P-sites. The protein is Small ribosomal subunit protein uS13 of Nitratiruptor sp. (strain SB155-2).